Here is a 57-residue protein sequence, read N- to C-terminus: MIREHLLKEIEKKRAELLQIVMANGMTSHITIELSQELDHLLIQYQKQRLRAVAGDE.

It belongs to the spo0E family.

In terms of biological role, aspartyl-phosphate phosphatase which specifically dephosphorylates the sporulation transcription factor Spo0A-P and negatively regulates the sporulation initiation pathway in order to control the proper timing of sporulation. The protein is Aspartyl-phosphate phosphatase YnzD (ynzD) of Bacillus subtilis (strain 168).